Consider the following 339-residue polypeptide: Anthranilate phosphoribosyltransferase (339 aa).

5-phospho-alpha-D-ribose 1-diphosphate contacts are provided by residues G80, 83-84 (GD), 90-93 (NVST), 108-116 (KHGNRSVTS), and S120. G80 contributes to the anthranilate binding site. S92 provides a ligand contact to Mg(2+). Residue N111 coordinates anthranilate. R166 is a binding site for anthranilate. Mg(2+) contacts are provided by D225 and E226.

It belongs to the anthranilate phosphoribosyltransferase family. As to quaternary structure, homodimer. It depends on Mg(2+) as a cofactor.

It catalyses the reaction N-(5-phospho-beta-D-ribosyl)anthranilate + diphosphate = 5-phospho-alpha-D-ribose 1-diphosphate + anthranilate. It functions in the pathway amino-acid biosynthesis; L-tryptophan biosynthesis; L-tryptophan from chorismate: step 2/5. In terms of biological role, catalyzes the transfer of the phosphoribosyl group of 5-phosphorylribose-1-pyrophosphate (PRPP) to anthranilate to yield N-(5'-phosphoribosyl)-anthranilate (PRA). The protein is Anthranilate phosphoribosyltransferase of Ignicoccus hospitalis (strain KIN4/I / DSM 18386 / JCM 14125).